Consider the following 407-residue polypeptide: PWWP domain-containing protein 3 (407 aa).

A disordered region spans residues 1-46 (MMVARTRSQKRKLEEINNQKKIKTKKKATGQQTSNTKNLRDVKKKG). Residues 63-129 (NGEYVLAKMS…SSNVLPLTVD (67 aa)) enclose the PWWP domain. Ser-160 and Ser-162 each carry phosphoserine. A disordered region spans residues 163–248 (DVEEDEFEPE…PIPSPKKTAK (86 aa)). Residues 172–208 (ENTRKKLQKPIEKPKKEKIEATPKIDGGKRLKNEKSS) show a composition bias toward basic and acidic residues. Phosphoserine occurs at positions 236, 238, and 242.

In terms of assembly, component of the mst2 complex composed of at least eaf6, mst2, nto1, pdp3, ptf1, ptf2 and tfg3.

It localises to the nucleus. In terms of biological role, component of the mst2 complex which is a highly specific H3 lysine 14 (H3K14) acetyltransferase that functions together with gcn5 to regulate global levels of H3K14 acetylation (H3K14ac), critical for DNA damage checkpoint activation. This is PWWP domain-containing protein 3 (pdp3) from Schizosaccharomyces pombe (strain 972 / ATCC 24843) (Fission yeast).